The following is a 211-amino-acid chain: Small ribosomal subunit protein uS3 (211 aa).

Residues 38 to 106 form the KH type-2 domain; that stretch reads LRNFLKKRLY…EVYLNIQEVR (69 aa).

It belongs to the universal ribosomal protein uS3 family. Part of the 30S ribosomal subunit. Forms a tight complex with proteins S10 and S14.

Functionally, binds the lower part of the 30S subunit head. Binds mRNA in the 70S ribosome, positioning it for translation. In Geobacter sp. (strain M21), this protein is Small ribosomal subunit protein uS3.